Consider the following 483-residue polypeptide: Keratin, type II cytoskeletal 7 (483 aa).

Ser2 carries the N-acetylserine modification. A phosphoserine mark is found at Ser2, Ser6, and Ser7. The head stretch occupies residues 2–107; sequence SVQFSSQTFS…DPQIQQVRKE (106 aa). A glycan (O-linked (GlcNAc) serine) is linked at Ser12. A disordered region spans residues 14–37; the sequence is SAAFPRRGGQGRLSSVSSRAGSVS. Arg20 is modified (dimethylated arginine; alternate). An Omega-N-methylarginine; alternate modification is found at Arg20. Low complexity predominate over residues 25–37; it reads RLSSVSSRAGSVS. 2 positions are modified to phosphoserine: Ser63 and Ser88. Residues 107-143 form a coil 1A region; it reads EEREQIKTLNNKFASFIDKVRFLEQQNQMLETKWRLL. In terms of domain architecture, IF rod spans 108–420; it reads EREQIKTLNN…KLLEGEESRL (313 aa). Residue Thr114 is modified to Phosphothreonine. A linker 1 region spans residues 144-161; sequence QEQKSSKGSSLPAIFEAH. Residue Lys147 forms a Glycyl lysine isopeptide (Lys-Gly) (interchain with G-Cter in SUMO2) linkage. The tract at residues 162 to 253 is coil 1B; sequence IANLRRQLDG…TLYEMELNEL (92 aa). Lys196 is subject to N6-acetyllysine. Residues 254 to 277 form a linker 12 region; sequence QTQISDTSVVLSMDNSRSLDLDSI. Residues Ser269 and Ser271 each carry the phosphoserine modification. A coil 2 region spans residues 278–416; the sequence is ISEVKAQYED…ATYRKLLEGE (139 aa). Residues Lys282 and Lys303 each participate in a glycyl lysine isopeptide (Lys-Gly) (interchain with G-Cter in SUMO2) cross-link. At Thr306 the chain carries Phosphothreonine. Residues Lys313 and Lys348 each participate in a glycyl lysine isopeptide (Lys-Gly) (interchain with G-Cter in SUMO2) cross-link. Residues 417 to 483 are tail; that stretch reads ESRLSGDGVG…TSSSRRSVRN (67 aa).

The protein belongs to the intermediate filament family. In terms of assembly, heterotetramer of two type I and two type II keratins. Interacts with eukaryotic translation initiator factor 3 (eIF3) subunit EIF3S10. Interacts with GPER1. Post-translationally, arg-20 is dimethylated, probably to asymmetric dimethylarginine.

In terms of biological role, blocks interferon-dependent interphase and stimulates DNA synthesis in cells. In Potorous tridactylus (Potoroo), this protein is Keratin, type II cytoskeletal 7.